Here is a 497-residue protein sequence, read N- to C-terminus: Vacuolar-processing enzyme beta-isozyme 1 (497 aa).

A signal peptide spans 1 to 23 (MAARCWVWGFVVALLAVAAAADG). N-linked (GlcNAc...) asparagine glycosylation is present at Asn-153. His-180 is a catalytic residue. Cys-222 acts as the Nucleophile in catalysis. Cys-255 and Cys-269 are disulfide-bonded. Residue Asn-340 is glycosylated (N-linked (GlcNAc...) asparagine). 2 cysteine pairs are disulfide-bonded: Cys-432–Cys-462 and Cys-444–Cys-479.

It belongs to the peptidase C13 family. Auto-catalytic activation.

It localises to the protein storage vacuole. The catalysed reaction is Hydrolysis of proteins and small molecule substrates at -Asn-|-Xaa- bonds.. Functionally, asparagine-specific endopeptidase that may be involved in processing of proteins targeted to vacuoles. Cysteine protease required for post-translational proteolysis of seed storage proteins in the protein storage vacuole (PSV) of developing seeds, by processing of proglutelin precursor to mature glutelin subunits, thus contributing to the formation of protein crystalline structures in PSV. This Oryza sativa subsp. indica (Rice) protein is Vacuolar-processing enzyme beta-isozyme 1.